We begin with the raw amino-acid sequence, 469 residues long: Sulfate adenylyltransferase subunit 1 (469 aa).

The 216-residue stretch at 22 to 237 (KEVLRFITCG…LEEVPVKSEE (216 aa)) folds into the tr-type G domain. The interval 31-38 (GSVDDGKS) is G1. 31 to 38 (GSVDDGKS) lines the GTP pocket. Positions 89–93 (GITID) are G2. Positions 110–113 (DTPG) are G3. GTP-binding positions include 110–114 (DTPGH) and 165–168 (NKMD). The interval 165–168 (NKMD) is G4. A G5 region spans residues 202–204 (SAK).

This sequence belongs to the TRAFAC class translation factor GTPase superfamily. Classic translation factor GTPase family. CysN/NodQ subfamily. As to quaternary structure, heterodimer composed of CysD, the smaller subunit, and CysN.

The catalysed reaction is sulfate + ATP + H(+) = adenosine 5'-phosphosulfate + diphosphate. It functions in the pathway sulfur metabolism; hydrogen sulfide biosynthesis; sulfite from sulfate: step 1/3. With CysD forms the ATP sulfurylase (ATPS) that catalyzes the adenylation of sulfate producing adenosine 5'-phosphosulfate (APS) and diphosphate, the first enzymatic step in sulfur assimilation pathway. APS synthesis involves the formation of a high-energy phosphoric-sulfuric acid anhydride bond driven by GTP hydrolysis by CysN coupled to ATP hydrolysis by CysD. This chain is Sulfate adenylyltransferase subunit 1, found in Methylorubrum extorquens (strain PA1) (Methylobacterium extorquens).